The primary structure comprises 133 residues: Small ribosomal subunit protein uS8 (133 aa).

The protein belongs to the universal ribosomal protein uS8 family. As to quaternary structure, part of the 30S ribosomal subunit. Contacts proteins S5 and S12.

Its function is as follows. One of the primary rRNA binding proteins, it binds directly to 16S rRNA central domain where it helps coordinate assembly of the platform of the 30S subunit. This is Small ribosomal subunit protein uS8 from Chlamydia trachomatis serovar L2b (strain UCH-1/proctitis).